We begin with the raw amino-acid sequence, 768 residues long: Eukaryotic elongation factor 2 kinase (768 aa).

The span at 1–17 shows a compositional bias: polar residues; sequence MTIDTTNESDNSPTNSP. The interval 1–21 is disordered; it reads MTIDTTNESDNSPTNSPGLEA. The region spanning 102-309 is the Alpha-type protein kinase domain; the sequence is RYSAIRKQWT…ICETMDLSNF (208 aa). 279 to 284 serves as a coordination point for ATP; that stretch reads GDGNLG. Over residues 402 to 411 the composition is skewed to acidic residues; it reads SEDEEDEEED. A disordered region spans residues 402-446; it reads SEDEEDEEEDYPRSEKSGNSQKSRRSRMSISTRSSGDESASRPRK.

It belongs to the protein kinase superfamily. Alpha-type protein kinase family. Monomer or homodimer. Interacts with cmd-1 in the presence of Ca(2+).

It catalyses the reaction [translation elongation factor 2] + ATP = [translation elongation factor 2]-phosphate + ADP + H(+). Calcium(2+)/calmodulin dependent activity. Undergoes calcium/calmodulin-dependent intramolecular autophosphorylation, and this results in it becoming partially calcium/calmodulin-independent. In terms of biological role, phosphorylates elongation factor-2 (eEF-2) at two threonine residues that are conserved in all eukaryotes and are located within a GTP-binding domain. Calcium(2+)/calmodulin dependent activity. Inactivates eEF-2 by catalyzing its phosphorylation. eEF-2 catalyzes the movement of the ribosome along mRNA during translation in eukaryotic cells. The sequence is that of Eukaryotic elongation factor 2 kinase (efk-1) from Caenorhabditis elegans.